A 147-amino-acid chain; its full sequence is MFNNILVVCVGNICRSPTAERLLQRYHPELKVESAGLGALVGKGADPTAISVAAEHQLSLEGHCARQISRRLCRNYDLILTMEKRHIERLCEMAPEMRGKVMLFGHWDNECEIPDPYRKSRETFAAVYTLLERSARQWAQALNAEQV.

The Nucleophile role is filled by Cys-9. Residue Arg-15 is part of the active site. Asp-115 serves as the catalytic Proton donor.

The protein belongs to the low molecular weight phosphotyrosine protein phosphatase family.

The catalysed reaction is O-phospho-L-tyrosyl-[protein] + H2O = L-tyrosyl-[protein] + phosphate. The protein operates within glycan metabolism; exopolysaccharide biosynthesis. In terms of biological role, dephosphorylates Wzc. Required for the extracellular polysaccharide colanic acid synthesis. Probably involved in the export of colanic acid from the cell to medium. Involved in protection of cells against contact-dependent growth inhibition (CDI). This is Low molecular weight protein-tyrosine-phosphatase Wzb (wzb) from Escherichia coli O157:H7.